The chain runs to 541 residues: MGSEKKENGVILEVEPKPSNGFTSKAVDLLEKIIVKLFYDSSLPHHWLSGNFAPVKDETPPVKDLTVQGHLPDCLNGEFVRVGPNPKFSPVAGYHWFDGDGMIHGLRIKDGKASYVSRFVKTSRFKQEEYFNGSKFMKIGDLKGLFGLLMVNMQMLRAKLKILDVSYGHGTANTALVYHHQKLLALSEGDKPYAIKVFEDGDLQTLGMLDYDKRLGHNFTAHPKVDPFTGEMFTFGYSHTAPYVTYRVISKDGFMQDPVPITISDPVMMHDFAITENYSIFMDLPLYFRPKEMVKNKTLIFSFDSTKKARFGVLPRYAKDDKHIRWFELPNCFIFHNANAWEEEDEIVLITCRLENPNLDVVGGAVKEKLDNFSNELYEMRFNMKTGEASQKKLSASTVDFPRVNESYTGRKQRYVYGTTLDSIAKVTGIIKFDLHAEPDSGKTKLEVGGNVQGLYDLGPGRFGSEAVYVPRVPGTDSEEDDGYLIFFVHDENTGKSFVHVIDAKRMSAEPVAVVELPQRVPYGFHAFFVTEDQLQEQAKF.

4 residues coordinate Fe cation: H222, H270, H336, and H526.

The protein belongs to the carotenoid oxygenase family. The cofactor is Fe(2+).

The catalysed reaction is all-trans-zeaxanthin + 2 O2 = 4,9-dimethyldodeca-2,4,6,8,10-pentaenedial + 2 (3R)-hydroxy-beta-ionone. Cleaves a variety of carotenoids at the 9-10 and 9'-10' double bonds. Probably not involved in abscisic acid biosynthesis. The sequence is that of Carotenoid 9,10(9',10')-cleavage dioxygenase 1 (CCD1) from Pisum sativum (Garden pea).